Reading from the N-terminus, the 417-residue chain is Glutamate-1-semialdehyde 2,1-aminomutase (417 aa).

An N6-(pyridoxal phosphate)lysine modification is found at Lys267.

The protein belongs to the class-III pyridoxal-phosphate-dependent aminotransferase family. HemL subfamily. In terms of assembly, homodimer. It depends on pyridoxal 5'-phosphate as a cofactor.

It is found in the cytoplasm. The catalysed reaction is (S)-4-amino-5-oxopentanoate = 5-aminolevulinate. It functions in the pathway porphyrin-containing compound metabolism; protoporphyrin-IX biosynthesis; 5-aminolevulinate from L-glutamyl-tRNA(Glu): step 2/2. This is Glutamate-1-semialdehyde 2,1-aminomutase from Solibacter usitatus (strain Ellin6076).